The following is a 370-amino-acid chain: Cobalt-precorrin-5B C(1)-methyltransferase (370 aa).

The protein belongs to the CbiD family.

The catalysed reaction is Co-precorrin-5B + S-adenosyl-L-methionine = Co-precorrin-6A + S-adenosyl-L-homocysteine. Its pathway is cofactor biosynthesis; adenosylcobalamin biosynthesis; cob(II)yrinate a,c-diamide from sirohydrochlorin (anaerobic route): step 6/10. Catalyzes the methylation of C-1 in cobalt-precorrin-5B to form cobalt-precorrin-6A. The protein is Cobalt-precorrin-5B C(1)-methyltransferase of Prochlorococcus marinus (strain MIT 9312).